The primary structure comprises 300 residues: Dioxygenase FUM3 (300 aa).

Positions 146, 148, and 222 each coordinate Fe cation.

It belongs to the PhyH family. As to quaternary structure, homodimer. Fe cation serves as cofactor.

The protein operates within mycotoxin biosynthesis. Dioxygenase; part of the gene cluster that mediates the biosynthesis of fumonisins B1 (FB1), B2 (FB2), B3 (FB3), and B4 (FB4), which are carcinogenic mycotoxins. Within the pathway, FUM3 performs the C-5 hydroxylation present in FB1 and FB2 and which occurs late in the biosynthesis. The biosynthesis starts with the FUM1-catalyzed carbon chain assembly from one molecule of acetyl-CoA, eight molecules of malonyl-CoA, and two molecules of methionine (in S-adenosyl form). The C18 polyketide chain is released from the enzyme by a nucleophilic attack of a carbanion, which is derived from R-carbon of alanine by decarboxylation, on the carbonyl carbon of polyketide acyl chain. This step is catalyzed by the pyridoxal 5'-phosphate-dependent aminoacyl transferase FUM8. The resultant 3-keto intermediate is then stereospecifically reduced to a 3-hydroxyl product by reductase FUM13. Subsequent oxidations at C-10 by the cytochrome P450 monooxygenase FUM2, C-14 and C-15 by FUM6, FUM12 or FUM15, tricarballylic esterification of the hydroxyl groups on C-14 and C-15 by acyltransferase FUM14, and C-5 hydroxylation by 2-keto-glutarate-dependent dioxygenase FUM3 furnish the biosynthesis of fumonisins. The tricarballylic moieties are most likely derived from the citric acid cycle, and their addition to the carbon backbone may involve FUM7, FUM10, FUM11 and FUM14. This is Dioxygenase FUM3 from Gibberella moniliformis (strain M3125 / FGSC 7600) (Maize ear and stalk rot fungus).